We begin with the raw amino-acid sequence, 425 residues long: MDKNIGEQLNKAYEAFRQACMDRDSAVKELQQKTENYEQRIREQQEQLSLQQTIIDKLKSQLLLVNSTQDNNYGCVPLLEDSETRKNNLTLDQPQDKVISGIAREKLPKVRRQEVSSPRKETSARSLGSPLLHERGNIEKTFWDLKEEFHKICMLAKAQKDHLSKLNIPDTATETQCSVPIQCTDKTDKQEALFKPQAKDDINRGAPSITSVTPRGLCRDEEDTSFESLSKFNVKFPPMDNDSTFLHSTPERPGILSPATSEAVCQEKFNMEFRDNPGNFVKTEETLFEIQGIDPIASAIQNLKTTDKTKPSNLVNTCIRTTLDRAACLPPGDHNALYVNSFPLLDPSDAPFPSLDSPGKAIRGPQQPIWKPFPNQDSDSVVLSGTDSELHIPRVCEFCQAVFPPSITSRGDFLRHLNSHFNGET.

Methionine 1 carries the post-translational modification N-acetylmethionine. The tract at residues 1-31 (MDKNIGEQLNKAYEAFRQACMDRDSAVKELQ) is necessary for interaction with ZC3H12A. The stretch at 22-62 (DRDSAVKELQQKTENYEQRIREQQEQLSLQQTIIDKLKSQL) forms a coiled coil. Residues 70–191 (DNNYGCVPLL…QCTDKTDKQE (122 aa)) are necessary for interaction with TRAF6. Phosphoserine is present on residues serine 126 and serine 129. Positions 133 to 172 (HERGNIEKTFWDLKEEFHKICMLAKAQKDHLSKLNIPDTA) are interaction with TBK1 and IKBKE. The TRAF family member interaction stretch occupies residues 172–191 (ATETQCSVPIQCTDKTDKQE). Residues serine 178 and serine 208 each carry the phosphoserine modification. Residue threonine 213 is modified to Phosphothreonine. Phosphoserine is present on residues serine 225, serine 228, serine 341, serine 354, and serine 357. The segment at 393–420 (PRVCEFCQAVFPPSITSRGDFLRHLNSH) adopts a UBZ1-type zinc-finger fold. Zn(2+)-binding residues include cysteine 396, cysteine 399, histidine 416, and histidine 420.

Homodimer. Found in a deubiquitination complex with TANK, USP10 and ZC3H12A; this complex inhibits genotoxic stress- or interleukin-1-beta-mediated NF-kappaB activation by promoting IKBKG or TRAF6 deubiquitination. Interacts with IKBKG; this interaction increases in response to DNA damage. Interacts with TRAF6; this interaction increases in response to DNA damage and recruits USP10 to the ubiquitinated TRAF6. Interacts with USP10; this interaction increases in response to DNA damage. Interacts with ZC3H12A; this interaction increases in response to DNA damage. Interacts with TBK1. Interacts with IKBKE. Also interacts with TRAF1, TRAF2, and TRAF3 by binding to their TRAF-C domains; the interaction with TRAF2 is disrupted by the phosphorylation of TANK by IKBKE. Interacts more strongly with TRAF1 and TRAF2 than TRAF3. Interacts with IKBKG; the interaction is enhanced by IKBKE and TBK1. Part of a ternary complex consisting of TANK, IKBKB and IKBKG. As to quaternary structure, (Microbial infection) Interacts with vaccinia virus protein C6. In terms of assembly, (Microbial infection) Interacts with Seneca Valley virus protease 3C; this interaction allows the cleavage of TANK and subsequent suppression of host innate immunity. In terms of processing, phosphorylated by IKBKE. (Microbial infection) Cleaved by encephalomyocarditis virus (EMCV) protease 3C. This cleavage allows the virus to disrupt the TANK-TBK1-IKKepsilon-IRF3 complex, thereby inhibiting the induction of the IFN-beta signal pathway. Post-translationally, (Microbial infection) Cleaved by Seneca Valley virus protease 3C allowing the virus to suppress interferon type-I through both RIG-I and Toll-like receptor-dependent pathways. Ubiquitous.

The protein localises to the cytoplasm. In terms of biological role, adapter protein involved in I-kappa-B-kinase (IKK) regulation which constitutively binds TBK1 and IKBKE playing a role in antiviral innate immunity. Acts as a regulator of TRAF function by maintaining them in a latent state. Blocks TRAF2 binding to LMP1 and inhibits LMP1-mediated NF-kappa-B activation. Negatively regulates NF-kappaB signaling and cell survival upon DNA damage. Plays a role as an adapter to assemble ZC3H12A, USP10 in a deubiquitination complex which plays a negative feedback response to attenuate NF-kappaB activation through the deubiquitination of IKBKG or TRAF6 in response to interleukin-1-beta (IL1B) stimulation or upon DNA damage. Promotes UBP10-induced deubiquitination of TRAF6 in response to DNA damage. May control negatively TRAF2-mediated NF-kappa-B activation signaled by CD40, TNFR1 and TNFR2. The chain is TRAF family member-associated NF-kappa-B activator (TANK) from Homo sapiens (Human).